We begin with the raw amino-acid sequence, 260 residues long: Ribonuclease HII (260 aa).

One can recognise an RNase H type-2 domain in the interval 70–260 (QAIAGIDEVG…PIKSMLKEKN (191 aa)). Residues D76, E77, and D171 each coordinate a divalent metal cation.

It belongs to the RNase HII family. The cofactor is Mn(2+). Requires Mg(2+) as cofactor.

It localises to the cytoplasm. It catalyses the reaction Endonucleolytic cleavage to 5'-phosphomonoester.. Functionally, endonuclease that specifically degrades the RNA of RNA-DNA hybrids. This chain is Ribonuclease HII, found in Streptococcus mutans serotype c (strain ATCC 700610 / UA159).